Reading from the N-terminus, the 239-residue chain is Exosome complex exonuclease RRP46 homolog (239 aa).

Met-1 carries the post-translational modification N-acetylmethionine.

The protein belongs to the RNase PH family. As to quaternary structure, probable component of the RNA exosome complex.

The protein localises to the nucleus. The protein resides in the nucleolus. In terms of biological role, probable component of the exosome 3'-&gt;5' exoribonuclease complex, a complex that degrades inherently unstable mRNAs containing AU-rich elements (AREs) within their 3'-untranslated regions. In Arabidopsis thaliana (Mouse-ear cress), this protein is Exosome complex exonuclease RRP46 homolog.